The following is a 665-amino-acid chain: Mitochondrial Rho GTPase 1 (665 aa).

Over 1–634 the chain is Cytoplasmic; sequence MTNDVIRIVV…NQDPEEETNT (634 aa). A Miro 1 domain is found at 3 to 177; sequence NDVIRIVVCG…FYLCQKAVMH (175 aa). GTP-binding positions include 12-19, 61-67, and 119-122; these read GDEGVGKS, DTQFSNS, and NVFD. 2 EF-hand domains span residues 193 to 228 and 313 to 348; these read NAVA…CFGR and EGYR…TPGI. The Ca(2+) site is built by Asp206, Asp208, Asp210, Tyr212, Glu217, Asp326, Asp328, Asp330, and Glu337. The region spanning 452 to 618 is the Miro 2 domain; it reads RSVFNCFVLG…FIQLAEAAQQ (167 aa). Residues 461–468, 498–502, and 567–570 contribute to the GTP site; these read GSHMSGKT, EMTGG, and LKAD. Residues 635–655 traverse the membrane as a helical; Anchor for type IV membrane protein segment; sequence IMPFALAGGATVLLAAAVAWI. Residues 656-665 are Mitochondrial intermembrane-facing; that stretch reads FKNVRVAGRE.

It belongs to the mitochondrial Rho GTPase family.

Its subcellular location is the mitochondrion outer membrane. In terms of biological role, mitochondrial GTPase involved in mitochondrial trafficking. Probably involved in control of anterograde transport of mitochondria and their subcellular distribution. This Yarrowia lipolytica (strain CLIB 122 / E 150) (Yeast) protein is Mitochondrial Rho GTPase 1 (GEM1).